The sequence spans 465 residues: MLWTDCLTRLRQELSDNVFAMWIRPLVAEEVEGILRLYAPNPYWTRYIQENHLELISILAEQLSEGRVRQVEILVDSRPGSILSSSEQPATTTAALQTAPIPQPAKVKREPEPVANTAVSSKSSKKKLLNPQFTFSLFVEGRSNQMAAETCRKVLTQLGASQHNPLFLYGPTGLGKTHLMQAVGNALLQAKPNARVMYMTSESFVQDFVSSLQKGKVEEFKKNCRSLDLLLVDDIHLLAGKEASLVEFFYTFNALLDESKQIILTSDRYPKELTELDPRLVSRFSWGLSVGVEPPDIETRIEILLKKAENSGVDLPRNCALFIAQQVVANVRELEGALNKVVAISRFKGAPIDLDVVRESLKDVLAIRARTISVENIQRVVSEYFRIPLKELIGPKRTRIYARPRQLAMGLARELTGDSFPEIGMAFGGRDHSTVMHACEKVVSLREEDPIFDEDYKNLLRLLQS.

Residues 1-87 are domain I, interacts with DnaA modulators; sequence MLWTDCLTRL…RPGSILSSSE (87 aa). A disordered region spans residues 81–123; the sequence is SILSSSEQPATTTAALQTAPIPQPAKVKREPEPVANTAVSSKS. Residues 88–100 show a composition bias toward low complexity; that stretch reads QPATTTAALQTAP. The domain II stretch occupies residues 88 to 127; that stretch reads QPATTTAALQTAPIPQPAKVKREPEPVANTAVSSKSSKKK. The domain III, AAA+ region stretch occupies residues 128 to 345; the sequence is LLNPQFTFSL…GALNKVVAIS (218 aa). ATP-binding residues include G173, G175, K176, and T177. A domain IV, binds dsDNA region spans residues 346–465; it reads RFKGAPIDLD…YKNLLRLLQS (120 aa).

It belongs to the DnaA family. As to quaternary structure, oligomerizes as a right-handed, spiral filament on DNA at oriC.

It localises to the cytoplasm. In terms of biological role, plays an essential role in the initiation and regulation of chromosomal replication. ATP-DnaA binds to the origin of replication (oriC) to initiate formation of the DNA replication initiation complex once per cell cycle. Binds the DnaA box (a 9 base pair repeat at the origin) and separates the double-stranded (ds)DNA. Forms a right-handed helical filament on oriC DNA; dsDNA binds to the exterior of the filament while single-stranded (ss)DNA is stabiized in the filament's interior. The ATP-DnaA-oriC complex binds and stabilizes one strand of the AT-rich DNA unwinding element (DUE), permitting loading of DNA polymerase. After initiation quickly degrades to an ADP-DnaA complex that is not apt for DNA replication. Binds acidic phospholipids. The sequence is that of Chromosomal replication initiator protein DnaA from Acinetobacter baumannii (strain ATCC 17978 / DSM 105126 / CIP 53.77 / LMG 1025 / NCDC KC755 / 5377).